The primary structure comprises 443 residues: Probable lipase C16A3.12c (443 aa).

At 1-16 (MSGFNKNQIYWGDYVG) the chain is on the cytoplasmic side. Residues 17–37 (VIAAFVGVYTELVARIFIYMI) form a helical; Signal-anchor for type II membrane protein membrane-spanning segment. Over 38–443 (PERVREWFRV…KHFVKQNGFH (406 aa)) the chain is Lumenal. Residues 116–410 (VVYCHHGLMT…HYEHLDFLWG (295 aa)) form the AB hydrolase-1 domain. Residues asparagine 134 and asparagine 177 are each glycosylated (N-linked (GlcNAc...) asparagine). Residue serine 210 is the Nucleophile of the active site. 2 N-linked (GlcNAc...) asparagine glycosylation sites follow: asparagine 304 and asparagine 335. Catalysis depends on charge relay system residues aspartate 378 and histidine 404.

This sequence belongs to the AB hydrolase superfamily. Lipase family.

Its subcellular location is the cytoplasm. The protein localises to the vacuole. It is found in the membrane. Probable lipase. This chain is Probable lipase C16A3.12c, found in Schizosaccharomyces pombe (strain 972 / ATCC 24843) (Fission yeast).